Here is a 104-residue protein sequence, read N- to C-terminus: NADH-quinone oxidoreductase subunit K (104 aa).

Transmembrane regions (helical) follow at residues 4-24 (VPAS…LFGA), 31-51 (VIVL…LVAF), and 67-87 (LFTM…LIAL).

The protein belongs to the complex I subunit 4L family. NDH-1 is composed of 14 different subunits. Subunits NuoA, H, J, K, L, M, N constitute the membrane sector of the complex.

The protein localises to the cell membrane. It carries out the reaction a quinone + NADH + 5 H(+)(in) = a quinol + NAD(+) + 4 H(+)(out). In terms of biological role, NDH-1 shuttles electrons from NADH, via FMN and iron-sulfur (Fe-S) centers, to quinones in the respiratory chain. The immediate electron acceptor for the enzyme in this species is believed to be a menaquinone. Couples the redox reaction to proton translocation (for every two electrons transferred, four hydrogen ions are translocated across the cytoplasmic membrane), and thus conserves the redox energy in a proton gradient. The chain is NADH-quinone oxidoreductase subunit K from Bacillus cereus (strain ATCC 14579 / DSM 31 / CCUG 7414 / JCM 2152 / NBRC 15305 / NCIMB 9373 / NCTC 2599 / NRRL B-3711).